The sequence spans 434 residues: Protein FAM83A (434 aa).

The interval 1–298 (MSRSRHLGKI…LYASSKPVMG (298 aa)) is DUF1669. Residues 76-97 (REPPCPPDTLGGAEAGPKGLDS) are disordered. 4 positions are modified to phosphoserine: S301, S327, S348, and S357. The tract at residues 308 to 399 (VPPGAAPANG…HDGPPAAVYS (92 aa)) is disordered. Low complexity-rich tracts occupy residues 320–332 (SSSSGSASDRTSS) and 348–357 (SVSASSGPCS). A compositionally biased stretch (pro residues) spans 358 to 369 (PAAPHPPPPPRF).

It belongs to the FAM83 family. In terms of assembly, directly interacts (via DUF1669) with casein kinase isoforms CSNK1A1, CSNK1A1L, CSNK1D and CSNK1E. Post-translationally, phosphorylated upon EGFR activation in a breast cancer cell line.

The protein localises to the cytoplasm. In terms of biological role, involved in mitochondrial maintenance during adipogenesis. May be acting by playing a role in the maintenance of normal mitochondrial function. The polypeptide is Protein FAM83A (Homo sapiens (Human)).